A 268-amino-acid chain; its full sequence is Zwei Ig domain protein zig-8 (268 aa).

The signal sequence occupies residues 1–21 (MRRFSNICVILFSFLYATGHG). Ig-like C2-type domains follow at residues 40 to 128 (PSQT…NTVY) and 140 to 251 (PSPS…NSAT). Cysteine 57 and cysteine 118 are joined by a disulfide. 4 N-linked (GlcNAc...) asparagine glycosylation sites follow: asparagine 82, asparagine 155, asparagine 164, and asparagine 191. Cysteine 165 and cysteine 226 are joined by a disulfide.

As to expression, expressed in PVT neurons and pharyngeal muscles.

It localises to the secreted. Together with zig-5, required postembryonically to maintain the position of ASI and ASH head neuron cell bodies and ventral nerve cord axons of PVQ, PVP and HSN neurons by preventing their displacement that could occur during body growth and movement. May act by reducing L1CAM-like protein sax-7 (long isoform) adhesion. This Caenorhabditis elegans protein is Zwei Ig domain protein zig-8.